A 248-amino-acid polypeptide reads, in one-letter code: Probable transcriptional regulatory protein Pfl01_4410 (248 aa).

The protein belongs to the TACO1 family.

It localises to the cytoplasm. This is Probable transcriptional regulatory protein Pfl01_4410 from Pseudomonas fluorescens (strain Pf0-1).